We begin with the raw amino-acid sequence, 158 residues long: Large ribosomal subunit protein uL11 (158 aa).

Belongs to the universal ribosomal protein uL11 family. As to quaternary structure, part of the ribosomal stalk of the 50S ribosomal subunit. Interacts with L10 and the large rRNA to form the base of the stalk. L10 forms an elongated spine to which L12 dimers bind in a sequential fashion forming a multimeric L10(L12)X complex.

In terms of biological role, forms part of the ribosomal stalk which helps the ribosome interact with GTP-bound translation factors. The protein is Large ribosomal subunit protein uL11 of Methanoculleus marisnigri (strain ATCC 35101 / DSM 1498 / JR1).